The sequence spans 388 residues: Protein TsgA homolog (388 aa).

The next 12 membrane-spanning stretches (helical) occupy residues 11 to 31, 50 to 70, 77 to 97, 101 to 121, 133 to 153, 160 to 180, 206 to 226, 244 to 264, 268 to 288, 298 to 318, 332 to 352, and 360 to 380; these read WISF…GMIM, TFLN…IEII, IFSF…NSIF, INMF…TFII, LLLL…IVTA, IIWY…FLLT, VFLL…FISW, SLVS…SFII, NLYR…YCFI, YIII…ITLA, LILL…SPIV, and TLIS…LIYF.

Belongs to the major facilitator superfamily. TsgA family.

Its subcellular location is the cell membrane. The polypeptide is Protein TsgA homolog (Buchnera aphidicola subsp. Acyrthosiphon pisum (strain Tuc7)).